The following is a 1146-amino-acid chain: Error-prone DNA polymerase (1146 aa).

2 disordered regions span residues 1–43 (MGWG…WSRK) and 154–178 (ATPE…PPGP). Over residues 12 to 26 (ELERVLSGRPGRTDP) the composition is skewed to basic and acidic residues.

This sequence belongs to the DNA polymerase type-C family. DnaE2 subfamily.

The protein localises to the cytoplasm. The enzyme catalyses DNA(n) + a 2'-deoxyribonucleoside 5'-triphosphate = DNA(n+1) + diphosphate. Functionally, DNA polymerase involved in damage-induced mutagenesis and translesion synthesis (TLS). It is not the major replicative DNA polymerase. The sequence is that of Error-prone DNA polymerase from Nocardia farcinica (strain IFM 10152).